The primary structure comprises 497 residues: Lysine--tRNA ligase (497 aa).

Mg(2+) contacts are provided by Glu-409 and Glu-416.

This sequence belongs to the class-II aminoacyl-tRNA synthetase family. In terms of assembly, homodimer. It depends on Mg(2+) as a cofactor.

The protein localises to the cytoplasm. The enzyme catalyses tRNA(Lys) + L-lysine + ATP = L-lysyl-tRNA(Lys) + AMP + diphosphate. The chain is Lysine--tRNA ligase from Streptococcus pyogenes serotype M49 (strain NZ131).